The primary structure comprises 300 residues: Sulfate adenylyltransferase subunit 2 (300 aa).

It belongs to the PAPS reductase family. CysD subfamily. As to quaternary structure, heterodimer composed of CysD, the smaller subunit, and CysN.

It carries out the reaction sulfate + ATP + H(+) = adenosine 5'-phosphosulfate + diphosphate. Its pathway is sulfur metabolism; hydrogen sulfide biosynthesis; sulfite from sulfate: step 1/3. With CysN forms the ATP sulfurylase (ATPS) that catalyzes the adenylation of sulfate producing adenosine 5'-phosphosulfate (APS) and diphosphate, the first enzymatic step in sulfur assimilation pathway. APS synthesis involves the formation of a high-energy phosphoric-sulfuric acid anhydride bond driven by GTP hydrolysis by CysN coupled to ATP hydrolysis by CysD. The chain is Sulfate adenylyltransferase subunit 2 from Magnetococcus marinus (strain ATCC BAA-1437 / JCM 17883 / MC-1).